A 177-amino-acid chain; its full sequence is Secretion monitor (177 aa).

The first 37 residues, 1 to 37 (MIGILNRWRQFGRRYFWPHLLLGMVAASLGVPSNLSG), serve as a signal peptide directing secretion.

This sequence belongs to the SecM family.

The protein resides in the cytoplasm. It is found in the cytosol. The protein localises to the periplasm. Its function is as follows. Regulates secA expression by translational coupling of the secM secA operon. Translational pausing at a specific Pro residue 5 residues before the end of the protein may allow disruption of a mRNA repressor helix that normally suppresses secA translation initiation. This Yersinia pseudotuberculosis serotype O:1b (strain IP 31758) protein is Secretion monitor.